Reading from the N-terminus, the 273-residue chain is MKSIVGVYETPQETIAAIEGLLTKGYDSDDISVVTSRRDTDYLESRTGTEVNQAIDAHQDESESFFDKLKDYFTMDDTATHSKALSDLDIKTDEIDKYQEDLDDGKLLVAVDTDADVIAPIDNGNALSGGFSSTNELDYTTKEEKTMPLREEQLKVDKEDVQTGEVEIGKEVKTEKRDMDIPVRHDEIYVERRPVDENKTDAAPVNDSEEIRVPIVEEKLEVTKKPVVTDEVVVGKRTVEENEHISETVKKEEPRLNKEGKVDGLDDDPLNNK.

Residues 241–264 (ENEHISETVKKEEPRLNKEGKVDG) show a composition bias toward basic and acidic residues. Positions 241 to 273 (ENEHISETVKKEEPRLNKEGKVDGLDDDPLNNK) are disordered.

The chain is Stress response protein YsnF (ysnF) from Bacillus subtilis (strain 168).